Reading from the N-terminus, the 188-residue chain is Probable nicotinate-nucleotide adenylyltransferase (188 aa).

This sequence belongs to the NadD family.

The catalysed reaction is nicotinate beta-D-ribonucleotide + ATP + H(+) = deamido-NAD(+) + diphosphate. The protein operates within cofactor biosynthesis; NAD(+) biosynthesis; deamido-NAD(+) from nicotinate D-ribonucleotide: step 1/1. Its function is as follows. Catalyzes the reversible adenylation of nicotinate mononucleotide (NaMN) to nicotinic acid adenine dinucleotide (NaAD). This chain is Probable nicotinate-nucleotide adenylyltransferase, found in Solibacter usitatus (strain Ellin6076).